The following is a 401-amino-acid chain: Imidazolonepropionase (401 aa).

Fe(3+) contacts are provided by His-70 and His-72. Residues His-70 and His-72 each contribute to the Zn(2+) site. Positions 79, 142, and 175 each coordinate 4-imidazolone-5-propanoate. N-formimidoyl-L-glutamate is bound at residue Tyr-142. Position 240 (His-240) interacts with Fe(3+). Residue His-240 participates in Zn(2+) binding. Position 243 (Gln-243) interacts with 4-imidazolone-5-propanoate. Position 315 (Asp-315) interacts with Fe(3+). Zn(2+) is bound at residue Asp-315. Asn-317 and Gly-319 together coordinate N-formimidoyl-L-glutamate. Thr-320 lines the 4-imidazolone-5-propanoate pocket.

It belongs to the metallo-dependent hydrolases superfamily. HutI family. Zn(2+) is required as a cofactor. The cofactor is Fe(3+).

The protein localises to the cytoplasm. The enzyme catalyses 4-imidazolone-5-propanoate + H2O = N-formimidoyl-L-glutamate. The protein operates within amino-acid degradation; L-histidine degradation into L-glutamate; N-formimidoyl-L-glutamate from L-histidine: step 3/3. Its function is as follows. Catalyzes the hydrolytic cleavage of the carbon-nitrogen bond in imidazolone-5-propanoate to yield N-formimidoyl-L-glutamate. It is the third step in the universal histidine degradation pathway. The protein is Imidazolonepropionase of Caulobacter sp. (strain K31).